The sequence spans 115 residues: Parathyroid hormone (115 aa).

Positions 1-25 (MMSAKDTVKVMVVMLAICFLARSDG) are cleaved as a signal peptide. Positions 26 to 31 (KPIKKR) are excised as a propeptide. An important for receptor binding region spans residues 51–69 (RVEWLRKKLQDVHNFVALG). The tract at residues 75-98 (RDGGSQRPRKKEDNVLVESHQKSL) is disordered.

It belongs to the parathyroid hormone family. Interacts with PTH1R (via N-terminal extracellular domain).

The protein resides in the secreted. Its function is as follows. Parathyroid hormone elevates calcium level by dissolving the salts in bone and preventing their renal excretion. Acts by binding to its receptor, PTH1R, activating G protein-coupled receptor signaling. Stimulates [1-14C]-2-deoxy-D-glucose (2DG) transport and glycogen synthesis in osteoblastic cells. This chain is Parathyroid hormone (PTH), found in Sus scrofa (Pig).